Consider the following 287-residue polypeptide: Outer membrane protein TP0453 (287 aa).

The first 24 residues, 1 to 24 (MIRRRYRGCTQGAWIVSVGMLFAS), serve as a signal peptide directing secretion. A lipid anchor (N-palmitoyl cysteine) is attached at Cys-25. The S-diacylglycerol cysteine moiety is linked to residue Cys-25. Amphipathic helix stretches follow at residues 36 to 40 (PLGVV), 56 to 63 (ENLISRII), 69 to 77 (KADIKKIVD), 103 to 112 (YAFTNLIFSR), 155 to 162 (MSKMLSRL), 172 to 179 (PRFEKECT), 194 to 202 (GGHFITKLL), 240 to 250 (FPIQFLISRVL), and 270 to 279 (AERLASVISS).

A mix of monomer and dimers; may integrate into the membrane as a dimer. In terms of processing, palmitoylated upon expression of a fusion protein with first 46 residues fused to PhoA in E.coli.

It is found in the cell outer membrane. Functionally, might be involved in ligand transport, alters membrane permeability at acidic pH (4.0 to 5.5). Incubation of the non-lipidated form with lipid vesicles increases their permeability. This is Outer membrane protein TP0453 from Treponema pallidum (strain Nichols).